Here is a 778-residue protein sequence, read N- to C-terminus: Endonuclease MutS2 (778 aa).

328–335 (GPNTGGKT) serves as a coordination point for ATP. Residues 703–778 (LDLRGKRYEE…GSGCTIANLG (76 aa)) enclose the Smr domain.

This sequence belongs to the DNA mismatch repair MutS family. MutS2 subfamily. In terms of assembly, homodimer. Binds to stalled ribosomes, contacting rRNA.

In terms of biological role, endonuclease that is involved in the suppression of homologous recombination and thus may have a key role in the control of bacterial genetic diversity. Its function is as follows. Acts as a ribosome collision sensor, splitting the ribosome into its 2 subunits. Detects stalled/collided 70S ribosomes which it binds and splits by an ATP-hydrolysis driven conformational change. Acts upstream of the ribosome quality control system (RQC), a ribosome-associated complex that mediates the extraction of incompletely synthesized nascent chains from stalled ribosomes and their subsequent degradation. Probably generates substrates for RQC. In Streptococcus equi subsp. equi (strain 4047), this protein is Endonuclease MutS2.